The primary structure comprises 91 residues: Small ribosomal subunit protein bS6 (91 aa).

Belongs to the bacterial ribosomal protein bS6 family.

Binds together with bS18 to 16S ribosomal RNA. The polypeptide is Small ribosomal subunit protein bS6 (Leptospira interrogans serogroup Icterohaemorrhagiae serovar copenhageni (strain Fiocruz L1-130)).